The sequence spans 508 residues: Proto-oncogene tyrosine-protein kinase LCK (508 aa).

Residue G2 is the site of N-myristoyl glycine attachment. S-palmitoyl cysteine attachment occurs at residues C3 and C5. An SH3 domain is found at 60-120; that stretch reads LQDKLVVALY…PHNFVAMVNS (61 aa). One can recognise an SH2 domain in the interval 126–223; sequence WFFKNLSRKN…GLCTRLGKPC (98 aa). The Protein kinase domain occupies 244–497; the sequence is LKLVEKLGAG…YMKSVLEDFF (254 aa). Residues 250-258 and K272 contribute to the ATP site; that span reads LGAGQFGEV. Catalysis depends on D363, which acts as the Proton acceptor. At Y393 the chain carries Phosphotyrosine; by autocatalysis. A Phosphotyrosine modification is found at Y504.

This sequence belongs to the protein kinase superfamily. Tyr protein kinase family. SRC subfamily. In terms of assembly, binds to the cytoplasmic domain of cell surface receptors, such as CD4, CD8. In terms of processing, phosphorylated on Tyr-393, which increases enzymatic activity, this site is dephosphorylated by PTN22. Phosphorylated on Tyr-504, presumably by CSK, which decreases activity. Dephosphorylated by PTPRC/CD45. Dephosphorylation at Tyr-393 by PTPN2 negatively regulates T-cells differentiation. Post-translationally, palmitoylation regulates association with the plasma membrane.

It is found in the cell membrane. The protein localises to the cytoplasm. It localises to the cytosol. The enzyme catalyses L-tyrosyl-[protein] + ATP = O-phospho-L-tyrosyl-[protein] + ADP + H(+). With respect to regulation, inhibited by tyrosine phosphorylation. Tyrosine kinase that plays an essential role for the selection and maturation of developing T-cell in the thymus and in mature T-cell function. Is constitutively associated with the cytoplasmic portions of the CD4 and CD8 surface receptors and plays a key role in T-cell antigen receptor(TCR)-linked signal transduction pathways. This is Proto-oncogene tyrosine-protein kinase LCK (LCK) from Gallus gallus (Chicken).